The chain runs to 306 residues: Ribosomal protein L11 methyltransferase (306 aa).

S-adenosyl-L-methionine contacts are provided by T154, G179, D201, and N242.

It belongs to the methyltransferase superfamily. PrmA family.

It is found in the cytoplasm. The enzyme catalyses L-lysyl-[protein] + 3 S-adenosyl-L-methionine = N(6),N(6),N(6)-trimethyl-L-lysyl-[protein] + 3 S-adenosyl-L-homocysteine + 3 H(+). Functionally, methylates ribosomal protein L11. The chain is Ribosomal protein L11 methyltransferase from Xylella fastidiosa (strain 9a5c).